The chain runs to 220 residues: Protein-methionine-sulfoxide reductase heme-binding subunit MsrQ (220 aa).

The next 6 helical transmembrane spans lie at 20-40 (LWLL…LGAT), 51-71 (FEHL…LVTP), 86-106 (ALGL…MVLD), 122-142 (PFIT…LTSN), 153-173 (WSSL…HFLM), and 175-195 (VKSW…LLLW).

The protein belongs to the MsrQ family. As to quaternary structure, heterodimer of a catalytic subunit (MsrP) and a heme-binding subunit (MsrQ). The cofactor is FMN. Heme b serves as cofactor.

The protein localises to the cell inner membrane. Its function is as follows. Part of the MsrPQ system that repairs oxidized periplasmic proteins containing methionine sulfoxide residues (Met-O), using respiratory chain electrons. Thus protects these proteins from oxidative-stress damage caused by reactive species of oxygen and chlorine generated by the host defense mechanisms. MsrPQ is essential for the maintenance of envelope integrity under bleach stress, rescuing a wide series of structurally unrelated periplasmic proteins from methionine oxidation. MsrQ provides electrons for reduction to the reductase catalytic subunit MsrP, using the quinone pool of the respiratory chain. In Brucella melitensis biotype 2 (strain ATCC 23457), this protein is Protein-methionine-sulfoxide reductase heme-binding subunit MsrQ.